The primary structure comprises 168 residues: Oleosin 18.2 kDa (168 aa).

Residue alanine 2 is modified to N-acetylalanine. The interval 2 to 45 is polar; it reads AEVRDRNLPHQVQVHPQYRLDNTTGGGYGAKNYHSGPSTSQVLA. Helical transmembrane passes span 43–63, 76–96, and 97–117; these read VLAVLTLLPIGGTLLALAGLT, PLFIIFSPVLVPAAIAIAMAV, and TGFLSSGAFGLTGLSSLSYVL. Residues 46-117 form a hydrophobic region; that stretch reads VLTLLPIGGT…TGLSSLSYVL (72 aa).

The protein belongs to the oleosin family.

The protein resides in the lipid droplet. The protein localises to the membrane. Functionally, may have a structural role to stabilize the lipid body during desiccation of the seed by preventing coalescence of the oil. Probably interacts with both lipid and phospholipid moieties of lipid bodies. May also provide recognition signals for specific lipase anchorage in lipolysis during seedling growth. The protein is Oleosin 18.2 kDa (MATP6-A) of Gossypium hirsutum (Upland cotton).